A 78-amino-acid chain; its full sequence is Small ribosomal subunit protein uS17 (78 aa).

Belongs to the universal ribosomal protein uS17 family. Part of the 30S ribosomal subunit.

One of the primary rRNA binding proteins, it binds specifically to the 5'-end of 16S ribosomal RNA. The sequence is that of Small ribosomal subunit protein uS17 from Rhizobium meliloti (strain 1021) (Ensifer meliloti).